Here is a 418-residue protein sequence, read N- to C-terminus: Staphyloferrin B transporter (418 aa).

Transmembrane regions (helical) follow at residues Phe-19–Leu-39, Leu-49–Trp-69, Gly-88–Val-108, Ile-163–Phe-183, Phe-222–Pro-242, Val-257–Gly-277, Ser-287–Thr-307, Ile-317–Ala-337, Met-353–Thr-373, and Thr-377–Ile-397.

This sequence belongs to the major facilitator superfamily.

The protein resides in the cell membrane. Its function is as follows. Involved in staphyloferrin B secretion. The chain is Staphyloferrin B transporter from Staphylococcus aureus (strain NCTC 8325 / PS 47).